The chain runs to 232 residues: Orotidine 5'-phosphate decarboxylase (232 aa).

Substrate-binding positions include Asp-13, Lys-35, 62–71 (DLKFHDIPNT), Thr-122, Arg-182, Gln-191, Gly-211, and Arg-212. The Proton donor role is filled by Lys-64.

This sequence belongs to the OMP decarboxylase family. Type 1 subfamily. In terms of assembly, homodimer.

The catalysed reaction is orotidine 5'-phosphate + H(+) = UMP + CO2. It participates in pyrimidine metabolism; UMP biosynthesis via de novo pathway; UMP from orotate: step 2/2. Its function is as follows. Catalyzes the decarboxylation of orotidine 5'-monophosphate (OMP) to uridine 5'-monophosphate (UMP). The chain is Orotidine 5'-phosphate decarboxylase from Pseudomonas paraeruginosa (strain DSM 24068 / PA7) (Pseudomonas aeruginosa (strain PA7)).